The chain runs to 569 residues: Formate--tetrahydrofolate ligase (569 aa).

ATP is bound at residue 68–75 (TPAGEGKT).

This sequence belongs to the formate--tetrahydrofolate ligase family.

The catalysed reaction is (6S)-5,6,7,8-tetrahydrofolate + formate + ATP = (6R)-10-formyltetrahydrofolate + ADP + phosphate. It functions in the pathway one-carbon metabolism; tetrahydrofolate interconversion. The polypeptide is Formate--tetrahydrofolate ligase (Psychrobacter sp. (strain PRwf-1)).